We begin with the raw amino-acid sequence, 199 residues long: Holliday junction branch migration complex subunit RuvA (199 aa).

Positions 1–63 (MIGCLIGEVF…EDAQQLYGFS (63 aa)) are domain I. Residues 64 to 142 (DAQEKTIFRT…TLAQGTSSAA (79 aa)) are domain II. The flexible linker stretch occupies residues 143-150 (ALPQIQFV). Residues 150–199 (VSNSPVAEAEAALQSLGYKPLEAQKAVAAVKADYTESADIIRAALKSMMK) form a domain III region.

It belongs to the RuvA family. As to quaternary structure, homotetramer. Forms an RuvA(8)-RuvB(12)-Holliday junction (HJ) complex. HJ DNA is sandwiched between 2 RuvA tetramers; dsDNA enters through RuvA and exits via RuvB. An RuvB hexamer assembles on each DNA strand where it exits the tetramer. Each RuvB hexamer is contacted by two RuvA subunits (via domain III) on 2 adjacent RuvB subunits; this complex drives branch migration. In the full resolvosome a probable DNA-RuvA(4)-RuvB(12)-RuvC(2) complex forms which resolves the HJ.

It localises to the cytoplasm. Functionally, the RuvA-RuvB-RuvC complex processes Holliday junction (HJ) DNA during genetic recombination and DNA repair, while the RuvA-RuvB complex plays an important role in the rescue of blocked DNA replication forks via replication fork reversal (RFR). RuvA specifically binds to HJ cruciform DNA, conferring on it an open structure. The RuvB hexamer acts as an ATP-dependent pump, pulling dsDNA into and through the RuvAB complex. HJ branch migration allows RuvC to scan DNA until it finds its consensus sequence, where it cleaves and resolves the cruciform DNA. The protein is Holliday junction branch migration complex subunit RuvA of Acinetobacter baumannii (strain ACICU).